We begin with the raw amino-acid sequence, 370 residues long: Protein-glutamate methylesterase/protein-glutamine glutaminase 3 (370 aa).

Positions 3 to 119 (KVLIVDDSAL…SLNVSRIERE (117 aa)) constitute a Response regulatory domain. D53 bears the 4-aspartylphosphate mark. Residues 166–360 (SLTEIGVVLI…GQLNAWMSRT (195 aa)) enclose the CheB-type methylesterase domain. Residues S178, H205, and D302 contribute to the active site.

It belongs to the CheB family. In terms of processing, phosphorylated by CheA. Phosphorylation of the N-terminal regulatory domain activates the methylesterase activity.

It is found in the cytoplasm. It catalyses the reaction [protein]-L-glutamate 5-O-methyl ester + H2O = L-glutamyl-[protein] + methanol + H(+). The catalysed reaction is L-glutaminyl-[protein] + H2O = L-glutamyl-[protein] + NH4(+). Functionally, involved in chemotaxis. Part of a chemotaxis signal transduction system that modulates chemotaxis in response to various stimuli. Catalyzes the demethylation of specific methylglutamate residues introduced into the chemoreceptors (methyl-accepting chemotaxis proteins or MCP) by CheR. Also mediates the irreversible deamidation of specific glutamine residues to glutamic acid. The sequence is that of Protein-glutamate methylesterase/protein-glutamine glutaminase 3 from Rhodospirillum rubrum (strain ATCC 11170 / ATH 1.1.1 / DSM 467 / LMG 4362 / NCIMB 8255 / S1).